An 85-amino-acid polypeptide reads, in one-letter code: Neurotoxin BmKAEP2 (85 aa).

The first 21 residues, 1–21, serve as a signal peptide directing secretion; the sequence is MKLFLLLVISASMLIDGLVNA. An LCN-type CS-alpha/beta domain is found at 22–82; that stretch reads DGYIRGSNGC…TWKSESNTCG (61 aa). Cystine bridges form between Cys31-Cys81, Cys35-Cys56, Cys42-Cys63, and Cys46-Cys65.

The protein belongs to the long (4 C-C) scorpion toxin superfamily. Sodium channel inhibitor family. Beta subfamily. In terms of tissue distribution, expressed by the venom gland.

Its subcellular location is the secreted. Depressant insect beta-toxins cause a transient contraction paralysis followed by a slow flaccid paralysis. They bind voltage-independently at site-4 of sodium channels (Nav) and shift the voltage of activation toward more negative potentials thereby affecting sodium channel activation and promoting spontaneous and repetitive firing. This toxin is active only on insects. Has potential anti-epilepsy effect. The sequence is that of Neurotoxin BmKAEP2 from Olivierus martensii (Manchurian scorpion).